The following is a 704-amino-acid chain: Probable ferric reduction oxidase 1 (704 aa).

Residues 1–16 (MGVGEMNKEVIDKVIK) are Cytoplasmic-facing. A helical transmembrane segment spans residues 17–36 (FLMMVILMGTIVIWIMMPTS). At 37–62 (TYKEIWLTSMRAKLGKSIYYGRPGVN) the chain is on the lumenal side. A helical transmembrane segment spans residues 63–81 (LLVYMFPMILLAFLGCIYL). Over 82 to 115 (HLKKSTTVNQFNSGVEKKRAKFGALRRPMLVNGP) the chain is Cytoplasmic. Residues 116 to 139 (LGIVTVTEVMFLTMFMALLLWSLA) form a helical membrane-spanning segment. The Lumenal segment spans residues 140–207 (NYMYRTFVNV…VGLTSESSIK (68 aa)). A Ferric oxidoreductase domain is found at 174 to 294 (GIVGNICLAF…YLYIVFMLFF (121 aa)). Residues 208–231 (YHIWLGHLVMIIFTSHGLCYFIYW) traverse the membrane as a helical segment. Residues H209 and H223 each coordinate heme. At 232–282 (ISKNQLVSKMLEWDRTAVSNLAGEIALVAGLMMWVTTYPKIRRRLFEVFFY) the chain is on the cytoplasmic side. A helical transmembrane segment spans residues 283-307 (SHYLYIVFMLFFVFHVGISHALIPL). Residues H284 and H297 each contribute to the heme site. The Lumenal segment spans residues 308–329 (PGFYIFLVDRFLRFLQSRNNVK). In terms of domain architecture, FAD-binding FR-type spans 323–430 (QSRNNVKLVS…EGPYGPSSTD (108 aa)). The helical transmembrane segment at 330–350 (LVSARVLPCDTVELNFSKNPM) threads the bilayer. The Cytoplasmic segment spans residues 351–550 (LMYSPTSTMF…PISPILGPNS (200 aa)). An FAD-binding site is contributed by 372–375 (HPFT). 422–425 (GPYG) contributes to the NAD(+) binding site. Residues 551–573 (WLCLAAILSSSFMIFIVIIAIIT) traverse the membrane as a helical segment. The Lumenal segment spans residues 574–592 (RYHIHPIDQNSEKYTWAYK). The chain crosses the membrane as a helical span at residues 593–614 (SLIYLVSISITVVTTSTAAMLW). Over 615 to 704 (NKKKYYAKND…LHFESISFSW (90 aa)) the chain is Cytoplasmic.

The protein belongs to the ferric reductase (FRE) family. FAD serves as cofactor. In terms of tissue distribution, expressed in siliques. Detected in roots.

The protein resides in the membrane. The enzyme catalyses 2 a Fe(II)-siderophore + NAD(+) + H(+) = 2 a Fe(III)-siderophore + NADH. Its function is as follows. Ferric chelate reductase involved in iron reduction in roots. May participate in the transport of electrons to a Fe(3+) ion via FAD and heme intermediates. This Arabidopsis thaliana (Mouse-ear cress) protein is Probable ferric reduction oxidase 1 (FRO1).